Consider the following 151-residue polypeptide: 3-dehydroquinate dehydratase (151 aa).

Y26 serves as the catalytic Proton acceptor. Substrate-binding residues include N75, H81, and D88. Catalysis depends on H101, which acts as the Proton donor. Substrate-binding positions include 102–103 (LS) and R112.

This sequence belongs to the type-II 3-dehydroquinase family. As to quaternary structure, homododecamer.

The catalysed reaction is 3-dehydroquinate = 3-dehydroshikimate + H2O. It participates in metabolic intermediate biosynthesis; chorismate biosynthesis; chorismate from D-erythrose 4-phosphate and phosphoenolpyruvate: step 3/7. In terms of biological role, catalyzes a trans-dehydration via an enolate intermediate. This Shewanella halifaxensis (strain HAW-EB4) protein is 3-dehydroquinate dehydratase.